A 556-amino-acid polypeptide reads, in one-letter code: Putative D-arabinono-1,4-lactone oxidase (556 aa).

The FAD-binding PCMH-type domain maps to 47–217 (FTSLPELYIQ…TEVTFKAVPA (171 aa)). At His84 the chain carries Pros-8alpha-FAD histidine.

It belongs to the oxygen-dependent FAD-linked oxidoreductase family. Requires FAD as cofactor.

It is found in the mitochondrion membrane. The enzyme catalyses D-arabinono-1,4-lactone + O2 = dehydro-D-arabinono-1,4-lactone + H2O2 + H(+). It functions in the pathway cofactor biosynthesis; D-erythroascorbate biosynthesis; dehydro-D-arabinono-1,4-lactone from D-arabinose: step 2/2. The protein is Putative D-arabinono-1,4-lactone oxidase (alo-1) of Neurospora crassa (strain ATCC 24698 / 74-OR23-1A / CBS 708.71 / DSM 1257 / FGSC 987).